Here is a 362-residue protein sequence, read N- to C-terminus: Peptide chain release factor 1 (362 aa).

At Q237 the chain carries N5-methylglutamine.

Belongs to the prokaryotic/mitochondrial release factor family. Post-translationally, methylated by PrmC. Methylation increases the termination efficiency of RF1.

The protein localises to the cytoplasm. In terms of biological role, peptide chain release factor 1 directs the termination of translation in response to the peptide chain termination codons UAG and UAA. This Aliivibrio fischeri (strain ATCC 700601 / ES114) (Vibrio fischeri) protein is Peptide chain release factor 1.